The following is a 255-amino-acid chain: Putative cysteine-rich repeat secretory protein 13 (255 aa).

A signal peptide spans 1–21; the sequence is MSSNILAMVAMQLLLIRIVSS. Gnk2-homologous domains lie at 28–136 and 142–252; these read YLNH…SVNT and YDSF…LYPF.

This sequence belongs to the cysteine-rich repeat secretory protein family.

The protein localises to the secreted. In Arabidopsis thaliana (Mouse-ear cress), this protein is Putative cysteine-rich repeat secretory protein 13 (CRRSP13).